Reading from the N-terminus, the 347-residue chain is NADH-ubiquinone oxidoreductase chain 2 (347 aa).

A run of 9 helical transmembrane segments spans residues 5–22 (ILAIVMSTVISGTIMVLI), 26–45 (WLTIWIGFEMNMLAIIPILM), 60–80 (FLTQATASMLLMLGIIINLLL), 150–170 (NPNLLMAMAIMSVLVGGWGGL), 178–198 (ILAYSSIAHMGWMIAVTTYNP), 200–220 (LMLLNLTIYITMTLGTFMLFM), 237–257 (LPLIASLILMTMLSLGGLPPL), 274–294 (DMAIMATFMAMTALLNLYFYM), and 327–347 (PPLIMISTMLLPLTPMVLTLF).

The protein belongs to the complex I subunit 2 family. Core subunit of respiratory chain NADH dehydrogenase (Complex I) which is composed of 45 different subunits. Interacts with TMEM242.

The protein localises to the mitochondrion inner membrane. The enzyme catalyses a ubiquinone + NADH + 5 H(+)(in) = a ubiquinol + NAD(+) + 4 H(+)(out). Its function is as follows. Core subunit of the mitochondrial membrane respiratory chain NADH dehydrogenase (Complex I) which catalyzes electron transfer from NADH through the respiratory chain, using ubiquinone as an electron acceptor. Essential for the catalytic activity and assembly of complex I. This is NADH-ubiquinone oxidoreductase chain 2 from Martes zibellina (Sable).